The chain runs to 213 residues: Cytochrome b6 (213 aa).

The helical transmembrane segment at 30 to 50 threads the bilayer; it reads IFYCLGGLTLLCFIIQCLTGV. A heme c-binding site is contributed by Cys-33. Heme b is bound by residues His-84 and His-98. A run of 3 helical transmembrane segments spans residues 88–108, 114–134, and 184–204; these read CQLM…TGAF, LNWV…FTGY, and LHVM…FIMI. His-185 and His-200 together coordinate heme b.

This sequence belongs to the cytochrome b family. PetB subfamily. In terms of assembly, the subunits of the cytochrome bc complex are a Rieske Fe-S protein (PetC), cytochrome b6 (PetB), subunit IV (PetD), and a diheme cytochrome c (PetX). Heme b serves as cofactor. Requires heme c as cofactor.

Its subcellular location is the cell membrane. Component of the cytochrome bc complex which donates electrons to the photosynthetic reaction center. This chain is Cytochrome b6, found in Heliobacterium modesticaldum (strain ATCC 51547 / Ice1).